Here is a 279-residue protein sequence, read N- to C-terminus: Ribose-phosphate pyrophosphokinase (279 aa).

Residues 31–33 (DGE) and 88–89 (RQ) each bind ATP. Mg(2+)-binding residues include His-121 and Asp-159. Lys-182 is a catalytic residue. Residues Arg-184, Asp-208, and 212 to 216 (STGGT) contribute to the D-ribose 5-phosphate site.

Belongs to the ribose-phosphate pyrophosphokinase family. Class III (archaeal) subfamily. Requires Mg(2+) as cofactor.

The protein resides in the cytoplasm. It catalyses the reaction D-ribose 5-phosphate + ATP = 5-phospho-alpha-D-ribose 1-diphosphate + AMP + H(+). The protein operates within metabolic intermediate biosynthesis; 5-phospho-alpha-D-ribose 1-diphosphate biosynthesis; 5-phospho-alpha-D-ribose 1-diphosphate from D-ribose 5-phosphate (route I): step 1/1. Involved in the biosynthesis of the central metabolite phospho-alpha-D-ribosyl-1-pyrophosphate (PRPP) via the transfer of pyrophosphoryl group from ATP to 1-hydroxyl of ribose-5-phosphate (Rib-5-P). The chain is Ribose-phosphate pyrophosphokinase from Pyrococcus furiosus (strain ATCC 43587 / DSM 3638 / JCM 8422 / Vc1).